The sequence spans 164 residues: NADH-quinone oxidoreductase subunit I (164 aa).

2 4Fe-4S ferredoxin-type domains span residues 55 to 85 (LRRY…IDAE) and 95 to 124 (TRYD…EGPN). 8 residues coordinate [4Fe-4S] cluster: Cys65, Cys68, Cys71, Cys75, Cys104, Cys107, Cys110, and Cys114.

Belongs to the complex I 23 kDa subunit family. As to quaternary structure, NDH-1 is composed of 14 different subunits. Subunits NuoA, H, J, K, L, M, N constitute the membrane sector of the complex. The cofactor is [4Fe-4S] cluster.

The protein resides in the cell inner membrane. The catalysed reaction is a quinone + NADH + 5 H(+)(in) = a quinol + NAD(+) + 4 H(+)(out). Its function is as follows. NDH-1 shuttles electrons from NADH, via FMN and iron-sulfur (Fe-S) centers, to quinones in the respiratory chain. The immediate electron acceptor for the enzyme in this species is believed to be ubiquinone. Couples the redox reaction to proton translocation (for every two electrons transferred, four hydrogen ions are translocated across the cytoplasmic membrane), and thus conserves the redox energy in a proton gradient. This Ruegeria sp. (strain TM1040) (Silicibacter sp.) protein is NADH-quinone oxidoreductase subunit I.